A 526-amino-acid chain; its full sequence is MVAKDYPFYLTVKRANCSLELPPASGPAKDAEEPSNKRVKPLSRVTSLANLIPPVKATPLKRFSQTLQRSISFRSESRPDILAPRPWSRNAAPSSTKRRDSKLWSETFDVCVNQMLTSKEIKRQEAIFELSQGEEDLIEDLKLAKKAYHDPMLKLSIMTEQELNQIFGTLDSLIPLHEELLSQLRDVRKPDGSTEHVGPILVGWLPCLSSYDSYCSNQVAAKALLDHKKQDHRVQDFLQRCLESPFSRKLDLWNFLDIPRSRLVKYPLLLREILRHTPNDNPDQQHLEEAINIIQGIVAEINTKTGESECRYYKERLLYLEEGQKDSLIDSSRVLCCHGELKNNRGVKLHVFLFQEVLVITRAVTHNEQLCYQLYRQPIPVKDLLLEDLQDGEVRLGGSLRGAFSNNERIKNFFRVSFKNGSQSQTHSLQANDTFNKQQWLNCIRQAKETVLCAAGQAGVLDSEGSFLNPTTGSRELQGETKLEQMDQSDSESDCSMDTSEVSLDCEHMEQTDSSCGNSRHGESNV.

Residues 20 to 40 (ELPPASGPAKDAEEPSNKRVK) form a disordered region. Phosphoserine occurs at positions 47 and 70. The DH domain occupies 122 to 304 (KRQEAIFELS…QGIVAEINTK (183 aa)). Residues 291–449 (INIIQGIVAE…WLNCIRQAKE (159 aa)) form the PH domain. Disordered stretches follow at residues 464-502 (EGSF…TSEV) and 507-526 (EHME…ESNV). The segment covering 466-475 (SFLNPTTGSR) has biased composition (polar residues).

As to quaternary structure, interacts with RHOA and RHOB.

It localises to the cytoplasm. Acts as a guanine nucleotide exchange factor (GEF) for RhoA and RhoB GTPases. This is Rho guanine nucleotide exchange factor 3 (ARHGEF3) from Macaca fascicularis (Crab-eating macaque).